Here is a 386-residue protein sequence, read N- to C-terminus: O-methyltransferase 10 (386 aa).

Residues S207, G231, D254, D274, and K288 each coordinate S-adenosyl-L-homocysteine. D254 contributes to the S-adenosyl-L-methionine binding site. H292 serves as the catalytic Proton acceptor.

Belongs to the class I-like SAM-binding methyltransferase superfamily. Cation-independent O-methyltransferase family. As to quaternary structure, homodimer.

The catalysed reaction is dopamine + S-adenosyl-L-methionine = 4-methoxytyramine + S-adenosyl-L-homocysteine + H(+). The enzyme catalyses 3,4-dihydroxy-5-methoxyphenethylamine + S-adenosyl-L-methionine = 3-hydroxy-4,5-dimethoxyphenethylamine + S-adenosyl-L-homocysteine + H(+). It catalyses the reaction 3-hydroxy-4,5-dimethoxyphenethylamine + S-adenosyl-L-methionine = mescaline + S-adenosyl-L-homocysteine + H(+). It carries out the reaction 4-hydroxy-3,5-dimethoxyphenethylamine + S-adenosyl-L-methionine = mescaline + S-adenosyl-L-homocysteine + H(+). The protein operates within aromatic compound metabolism. It participates in alkaloid biosynthesis. O-methyltransferase participating in the biosynthesis of natural products derived from phenylethylamine, including mescaline, a natural hallucinogen potentially used in psychotherapeutic treatments. Catalyzes the O-methylation of mescaline para hydroxyl groups, using dopamine, 3,4-dihydroxy-5-methoxyphenethylamine, 3-hydroxy-4,5-dimethoxyphenethylamine and 4-hydroxy-3,5-dimethoxyphenethylamine as substrates. The chain is O-methyltransferase 10 from Lophophora williamsii (Peyote).